The following is a 1370-amino-acid chain: DNA polymerase II large subunit (1370 aa).

2 disordered regions span residues 279–317 (IGAD…PRAA) and 1041–1081 (AGDA…DGGS).

It belongs to the archaeal DNA polymerase II family. In terms of assembly, heterodimer of a large subunit and a small subunit. In terms of processing, this protein undergoes a protein self splicing that involves a post-translational excision of the intervening region (intein) followed by peptide ligation.

The catalysed reaction is DNA(n) + a 2'-deoxyribonucleoside 5'-triphosphate = DNA(n+1) + diphosphate. The enzyme catalyses Exonucleolytic cleavage in the 3'- to 5'-direction to yield nucleoside 5'-phosphates.. In terms of biological role, possesses two activities: a DNA synthesis (polymerase) and an exonucleolytic activity that degrades single-stranded DNA in the 3'- to 5'-direction. Has a template-primer preference which is characteristic of a replicative DNA polymerase. The protein is DNA polymerase II large subunit (polC) of Halobacterium salinarum (strain ATCC 700922 / JCM 11081 / NRC-1) (Halobacterium halobium).